Reading from the N-terminus, the 204-residue chain is Phosphoheptose isomerase (204 aa).

The region spanning 38 to 199 is the SIS domain; sequence MAVALARGGK…LFEAVMELGP (162 aa). A substrate-binding site is contributed by 53–55; it reads NGG. Zn(2+)-binding residues include His62 and Glu66. Residues Glu66, 95 to 96, 121 to 123, Ser126, and Gln172 each bind substrate; these read ND and STS. Positions 172 and 180 each coordinate Zn(2+).

This sequence belongs to the SIS family. GmhA subfamily. As to quaternary structure, homotetramer. Zn(2+) is required as a cofactor.

Its subcellular location is the cytoplasm. The catalysed reaction is 2 D-sedoheptulose 7-phosphate = D-glycero-alpha-D-manno-heptose 7-phosphate + D-glycero-beta-D-manno-heptose 7-phosphate. It functions in the pathway carbohydrate biosynthesis; D-glycero-D-manno-heptose 7-phosphate biosynthesis; D-glycero-alpha-D-manno-heptose 7-phosphate and D-glycero-beta-D-manno-heptose 7-phosphate from sedoheptulose 7-phosphate: step 1/1. In terms of biological role, catalyzes the isomerization of sedoheptulose 7-phosphate in D-glycero-D-manno-heptose 7-phosphate. This is Phosphoheptose isomerase from Solidesulfovibrio magneticus (strain ATCC 700980 / DSM 13731 / RS-1) (Desulfovibrio magneticus).